The chain runs to 497 residues: MTKHIIVIGGGLGGISAAIRMAQSGYSVSLYEQNNHIGGKVNRHESDGFGFDLGPSILTMPYIFEKLFEYSKKQMSDYVTIKRLPHQWRSFFPDGTTIDLYEGIKETGQHNAILSKKDIEELQNYLNYTRRIDRITEKGYFNYGLDTLSQIIKFHGPLNALINYDYVHTMQQAIDKRISNPYLRQMLGYFIKYVGSSSYDAPAVLSMLFHMQQEQGLWYVEGGIHHLANALEKLAREEGVTIHTGTRVDNIKIYQRHVTGVRLDTGEFVKADYIISNMEVIPTYKYLLHLGTQRLNKLEREFEPASSGYVMHLGVACQYPQLEHHNFFFTENAYLNYQQVFHEKVLPDDPTIYLVNTNKTDHTQAPVGYENIKVLPHIPYIQDQPFTTEDYAKFRDKILDKLEKMGLTDLRKHIIYEDVWTPEDIEKNYRSNRGAIYGVVADKKKNKGFKFTKESQYFENLYFVGGSVNPGGGMPMVTLSGQQVADKINAREAKNRK.

7-19 (VIGGGLGGISAAI) contributes to the FAD binding site.

It belongs to the carotenoid/retinoid oxidoreductase family. CrtP subfamily. FAD is required as a cofactor.

It carries out the reaction all-trans-4,4'-diaponeurosporene + 2 AH2 + 2 O2 = 4,4'-diaponeurosporenal + 2 A + 3 H2O. The protein operates within carotenoid biosynthesis; staphyloxanthin biosynthesis; staphyloxanthin from farnesyl diphosphate: step 3/5. Functionally, involved in the biosynthesis of the yellow-orange carotenoid staphyloxanthin, which plays a role in the virulence via its protective function against oxidative stress. Catalyzes the oxidation of the terminal methyl side group of 4,4'-diaponeurosporene to form 4,4'-diaponeurosporen-4-al. The protein is 4,4'-diaponeurosporene oxygenase of Staphylococcus aureus (strain bovine RF122 / ET3-1).